Consider the following 122-residue polypeptide: UPF0102 protein Dred_2035 (122 aa).

This sequence belongs to the UPF0102 family.

This is UPF0102 protein Dred_2035 from Desulforamulus reducens (strain ATCC BAA-1160 / DSM 100696 / MI-1) (Desulfotomaculum reducens).